Consider the following 568-residue polypeptide: Proline--tRNA ligase (568 aa).

It belongs to the class-II aminoacyl-tRNA synthetase family. ProS type 1 subfamily. In terms of assembly, homodimer.

Its subcellular location is the cytoplasm. The enzyme catalyses tRNA(Pro) + L-proline + ATP = L-prolyl-tRNA(Pro) + AMP + diphosphate. Its function is as follows. Catalyzes the attachment of proline to tRNA(Pro) in a two-step reaction: proline is first activated by ATP to form Pro-AMP and then transferred to the acceptor end of tRNA(Pro). As ProRS can inadvertently accommodate and process non-cognate amino acids such as alanine and cysteine, to avoid such errors it has two additional distinct editing activities against alanine. One activity is designated as 'pretransfer' editing and involves the tRNA(Pro)-independent hydrolysis of activated Ala-AMP. The other activity is designated 'posttransfer' editing and involves deacylation of mischarged Ala-tRNA(Pro). The misacylated Cys-tRNA(Pro) is not edited by ProRS. The protein is Proline--tRNA ligase of Macrococcus caseolyticus (strain JCSC5402) (Macrococcoides caseolyticum).